A 141-amino-acid chain; its full sequence is Small ribosomal subunit protein bS16 (141 aa).

2 stretches are compositionally biased toward polar residues: residues 89 to 101 (NVSV…TEAI) and 109 to 129 (ATAN…TATI). A disordered region spans residues 89–141 (NVSVSHAESTEAITNAEPIQATANTESNEVSDSESTATATIRESEEQPPISES).

It belongs to the bacterial ribosomal protein bS16 family.

The chain is Small ribosomal subunit protein bS16 from Trichodesmium erythraeum (strain IMS101).